We begin with the raw amino-acid sequence, 602 residues long: Myotubularin (602 aa).

A disordered region spans residues 1–40; it reads MASSSASDCDAHPVERESMRKVSQDGVRQDMSKSGPRLPG. Residues 9–31 are compositionally biased toward basic and acidic residues; it reads CDAHPVERESMRKVSQDGVRQDM. Ser18 is modified (phosphoserine). The region spanning 28-97 is the GRAM domain; that stretch reads RQDMSKSGPR…GVISRIEKMG (70 aa). In terms of domain architecture, Myotubularin phosphatase spans 163–538; the sequence is GWAIYNPVEE…RHLELWVNYY (376 aa). A 1,2-diacyl-sn-glycero-3-phospho-(1D-myo-inositol-3,5-bisphosphate) is bound by residues Asn288, Asn313, and Ile314. The a 1,2-diacyl-sn-glycero-3-phospho-(1D-myo-inositol-3-phosphate) site is built by Asn288, Asn313, and Ile314. Cys375 serves as the catalytic Phosphocysteine intermediate. A 1,2-diacyl-sn-glycero-3-phospho-(1D-myo-inositol-3,5-bisphosphate) is bound by residues Ser376, Asp377, Gly378, Trp379, Asp380, Arg381, Lys417, and Arg421. Residues Ser376, Asp377, Gly378, Trp379, Asp380, and Arg381 each contribute to the a 1,2-diacyl-sn-glycero-3-phospho-(1D-myo-inositol-3-phosphate) site. Arg421 serves as a coordination point for a 1,2-diacyl-sn-glycero-3-phospho-(1D-myo-inositol-3-phosphate). Position 495 is a phosphothreonine (Thr495). Positions 578-592 are enriched in polar residues; the sequence is PTKLTDSSTPPSGSA. Positions 578–602 are disordered; the sequence is PTKLTDSSTPPSGSAQIAPRMQTHF.

Belongs to the protein-tyrosine phosphatase family. Non-receptor class myotubularin subfamily. Heterodimer with MTMR12. Interacts with KMT2A/MLL1 (via SET domain). Interacts with DES in skeletal muscle but not in cardiac muscle. Interacts with SPEG.

The protein resides in the cytoplasm. It is found in the cell membrane. It localises to the cell projection. The protein localises to the filopodium. Its subcellular location is the ruffle. The protein resides in the late endosome. It is found in the myofibril. It localises to the sarcomere. It carries out the reaction a 1,2-diacyl-sn-glycero-3-phospho-(1D-myo-inositol-3-phosphate) + H2O = a 1,2-diacyl-sn-glycero-3-phospho-(1D-myo-inositol) + phosphate. It catalyses the reaction a 1,2-diacyl-sn-glycero-3-phospho-(1D-myo-inositol-3,5-bisphosphate) + H2O = a 1,2-diacyl-sn-glycero-3-phospho-(1D-myo-inositol-5-phosphate) + phosphate. The enzyme catalyses 1,2-dioctanoyl-sn-glycero-3-phospho-(1-D-myo-inositol-3-phosphate) + H2O = 1,2-dioctanoyl-sn-glycero-3-phospho-(1D-myo-inositol) + phosphate. The catalysed reaction is 1,2-dioctanoyl-sn-glycero-3-phospho-(1D-myo-inositol-3,5-bisphosphate) + H2O = 1,2-dioctanoyl-sn-glycero-3-phospho-(1D-myo-inositol-5-phosphate) + phosphate. It carries out the reaction 1,2-dihexadecanoyl-sn-glycero-3-phospho-(1D-myo-inositol-3,5-phosphate) + H2O = 1,2-dihexadecanoyl-sn-glycero-3-phospho-(1D-myo-inositol-5-phosphate) + phosphate. Allosterically activated by phosphatidylinositol 5-phosphate (PI5P). Its function is as follows. Lipid phosphatase which dephosphorylates phosphatidylinositol 3-monophosphate (PI3P) and phosphatidylinositol 3,5-bisphosphate (PI(3,5)P2). Has also been shown to dephosphorylate phosphotyrosine- and phosphoserine-containing peptides. Negatively regulates EGFR degradation through regulation of EGFR trafficking from the late endosome to the lysosome. Plays a role in vacuolar formation and morphology. Regulates desmin intermediate filament assembly and architecture. Plays a role in mitochondrial morphology and positioning. Required for skeletal muscle maintenance but not for myogenesis. In skeletal muscles, stabilizes MTMR12 protein levels. The protein is Myotubularin of Rattus norvegicus (Rat).